The primary structure comprises 149 residues: UPF0260 protein Pmen_1776 (149 aa).

It belongs to the UPF0260 family.

The protein is UPF0260 protein Pmen_1776 of Ectopseudomonas mendocina (strain ymp) (Pseudomonas mendocina).